The following is a 144-amino-acid chain: Small ribosomal subunit protein eS10A (144 aa).

The segment at T90–Q144 is disordered. Over residues G103 to G126 the composition is skewed to basic and acidic residues.

It belongs to the eukaryotic ribosomal protein eS10 family. In terms of assembly, component of the small ribosomal subunit (SSU). Mature yeast ribosomes consist of a small (40S) and a large (60S) subunit. The 40S small subunit contains 1 molecule of ribosomal RNA (18S rRNA) and at least 33 different proteins. The large 60S subunit contains 3 rRNA molecules (25S, 5.8S and 5S rRNA) and at least 46 different proteins. eS10 interacts with GCN1 (via middle region); this interaction is direct and promotes GCN2 kinase activity.

Its subcellular location is the cytoplasm. In terms of biological role, component of the ribosome, a large ribonucleoprotein complex responsible for the synthesis of proteins in the cell. The small ribosomal subunit (SSU) binds messenger RNAs (mRNAs) and translates the encoded message by selecting cognate aminoacyl-transfer RNA (tRNA) molecules. The large subunit (LSU) contains the ribosomal catalytic site termed the peptidyl transferase center (PTC), which catalyzes the formation of peptide bonds, thereby polymerizing the amino acids delivered by tRNAs into a polypeptide chain. The nascent polypeptides leave the ribosome through a tunnel in the LSU and interact with protein factors that function in enzymatic processing, targeting, and the membrane insertion of nascent chains at the exit of the ribosomal tunnel. eS10 plays a role as a positive regulator of the GCN2 kinase activity by stimulating GCN1-mediated GCN2 activation. This Schizosaccharomyces pombe (strain 972 / ATCC 24843) (Fission yeast) protein is Small ribosomal subunit protein eS10A (rps1001).